The sequence spans 1299 residues: DNA-directed RNA polymerase subunit beta' (1299 aa).

Positions 60, 62, 75, and 78 each coordinate Zn(2+). The disordered stretch occupies residues 385–405 (GRRGRPVTGPGNRPLKSLSDM). Mg(2+) contacts are provided by aspartate 535, aspartate 537, and aspartate 539. Zn(2+) is bound by residues cysteine 886, cysteine 962, cysteine 969, and cysteine 972.

It belongs to the RNA polymerase beta' chain family. In terms of assembly, the RNAP catalytic core consists of 2 alpha, 1 beta, 1 beta' and 1 omega subunit. When a sigma factor is associated with the core the holoenzyme is formed, which can initiate transcription. Mg(2+) is required as a cofactor. Requires Zn(2+) as cofactor.

It catalyses the reaction RNA(n) + a ribonucleoside 5'-triphosphate = RNA(n+1) + diphosphate. DNA-dependent RNA polymerase catalyzes the transcription of DNA into RNA using the four ribonucleoside triphosphates as substrates. This chain is DNA-directed RNA polymerase subunit beta', found in Streptomyces avermitilis (strain ATCC 31267 / DSM 46492 / JCM 5070 / NBRC 14893 / NCIMB 12804 / NRRL 8165 / MA-4680).